The primary structure comprises 558 residues: Cytochrome P450 monooxygenase grgG (558 aa).

The helical transmembrane segment at 11–31 threads the bilayer; it reads PASFIYFPLLILVGHALIFIL. Cys470 contributes to the heme binding site.

Belongs to the cytochrome P450 family. Requires heme as cofactor.

It is found in the membrane. Its pathway is secondary metabolite biosynthesis. Functionally, cytochrome P450 monooxygenase; part of the gene cluster that mediates the biosynthesis of gregatin A, a fungal polyketide featuring an alkylated furanone core. The PKS grgA synthesizes C11 and C4 polyketide chains in the presence and absence of the trans-enoyl reductase grgB, respectively. The polyketide transferase grgF is then responsible for the fusion of the two carbon chains to produce the furanone skeleton of gregatin A. Next, the cytochrome P450 monooxygenase grgG performs the oxidative cyclization to furnish the gregatin scaffold and leads to the formation of desmethylgregatin A. In this transformation, grgG initially abstracts a hydrogen atom from C-8 to generate a substrate radical, from which one electron is transferred to the iron-heme center to yield a carbocationic species. Heterocyclization along with double-bond isomerizations provides desmethylgregatin A with the furanone ring. Alternatively, grgG might provide hydroxylation at the C-8 radical, which is followed by dehydration to give the cyclized desmethylgregatin A. Finally, the O-methyltransferase grgD methylates the carboxyl group of desmethylgregatin A to provide gregatin A. This is Cytochrome P450 monooxygenase grgG (grgG) from Penicillium sp.